The following is a 114-amino-acid chain: uncharacterized protein (114 aa).

One can recognise an HIT domain in the interval 6-114; it reads IFSKIIRREI…GGRPFSWPPG (109 aa). Positions 98–102 match the Histidine triad motif motif; it reads HLHLH.

This is an uncharacterized protein from Synechocystis sp. (strain ATCC 27184 / PCC 6803 / Kazusa).